Consider the following 552-residue polypeptide: Lysine--tRNA ligase (552 aa).

The short motif at 71-79 (PSGLPHLGT) is the 'HIGH' region element. The 'KMSKS' region signature appears at 319–323 (KISKS). Lys-322 is an ATP binding site.

Belongs to the class-I aminoacyl-tRNA synthetase family.

It localises to the cytoplasm. It carries out the reaction tRNA(Lys) + L-lysine + ATP = L-lysyl-tRNA(Lys) + AMP + diphosphate. This Caulobacter sp. (strain K31) protein is Lysine--tRNA ligase.